The chain runs to 265 residues: MASTQCFLHHHALSTPARTPLVRSIVPSLKPNQLLVCRAQKQSAPQEDNVNSVSVSRRLALTVLIGAAAVGSKVSPADAAYGEAANVFGKPKTDTDFQTYNGDGFKLQIPSKWNPNKEVEYPGQVLRFEDNFDATSNVIVAITPTDKKSITDFGSPEQFLSQVDYLLGRQAYSGKTDSEGGFESDAVAIANVLETSSAEVGGKPYYYLSVLTRTADGNEGGKHQLITATVNDGKLYICKAQAGDKRWFKGAKKFVENTATSFSLA.

Residues M1–A79 constitute a chloroplast transit peptide.

Belongs to the PsbP family.

It is found in the plastid. The protein resides in the chloroplast thylakoid membrane. Functionally, may be involved in the regulation of photosystem II. This is Oxygen-evolving enhancer protein 2-2, chloroplastic (PSBP2) from Nicotiana tabacum (Common tobacco).